A 160-amino-acid chain; its full sequence is Cytochrome b6-f complex subunit 4 (160 aa).

A run of 3 helical transmembrane segments spans residues 36–56 (LLYT…GLAL), 95–115 (LLGV…PFIE), and 127–147 (PIAT…GIGA).

Belongs to the cytochrome b family. PetD subfamily. As to quaternary structure, the 4 large subunits of the cytochrome b6-f complex are cytochrome b6, subunit IV (17 kDa polypeptide, petD), cytochrome f and the Rieske protein, while the 4 small subunits are petG, petL, petM and petN. The complex functions as a dimer.

It is found in the plastid. The protein resides in the chloroplast thylakoid membrane. Component of the cytochrome b6-f complex, which mediates electron transfer between photosystem II (PSII) and photosystem I (PSI), cyclic electron flow around PSI, and state transitions. The polypeptide is Cytochrome b6-f complex subunit 4 (Cyanidioschyzon merolae (strain NIES-3377 / 10D) (Unicellular red alga)).